Here is a 217-residue protein sequence, read N- to C-terminus: Probable nicotinate-nucleotide adenylyltransferase (217 aa).

This sequence belongs to the NadD family.

It carries out the reaction nicotinate beta-D-ribonucleotide + ATP + H(+) = deamido-NAD(+) + diphosphate. The protein operates within cofactor biosynthesis; NAD(+) biosynthesis; deamido-NAD(+) from nicotinate D-ribonucleotide: step 1/1. In terms of biological role, catalyzes the reversible adenylation of nicotinate mononucleotide (NaMN) to nicotinic acid adenine dinucleotide (NaAD). The chain is Probable nicotinate-nucleotide adenylyltransferase from Baumannia cicadellinicola subsp. Homalodisca coagulata.